The chain runs to 209 residues: Probable phosphatidylglycerophosphatase, mitochondrial (209 aa).

The Phosphoryl acceptor motif lies at 57–61; the sequence is DKDNC.

This sequence belongs to the GEP4 family.

The protein resides in the mitochondrion inner membrane. The catalysed reaction is a 1,2-diacyl-sn-glycero-3-phospho-(1'-sn-glycero-3'-phosphate) + H2O = a 1,2-diacyl-sn-glycero-3-phospho-(1'-sn-glycerol) + phosphate. It functions in the pathway phospholipid metabolism; phosphatidylglycerol biosynthesis; phosphatidylglycerol from CDP-diacylglycerol: step 2/2. Functionally, phosphatidylglycerophosphatase involved in the biosynthesis of cardiolipin (CL), a unique dimeric phosphoglycerolipid predominantly present in mitochondrial membranes and which has important functions for cellular energy metabolism, mitochondrial dynamics and the initiation of apoptotic pathways. In Schizosaccharomyces pombe (strain 972 / ATCC 24843) (Fission yeast), this protein is Probable phosphatidylglycerophosphatase, mitochondrial (gep4).